Here is a 206-residue protein sequence, read N- to C-terminus: Holliday junction branch migration complex subunit RuvA (206 aa).

Positions 1-64 (MIGRLRGNLL…EDAQLLYGFN (64 aa)) are domain I. The interval 65–143 (TKKERALFRE…GWGAGDLFTP (79 aa)) is domain II. Residues 144–157 (ADTTSMDDASDLIS) are flexible linker. The tract at residues 158–206 (SPQSAQDEAVSALISLGYKPVQASKMVSQVAKPDMTSESLIRESLKSMI) is domain III.

This sequence belongs to the RuvA family. Homotetramer. Forms an RuvA(8)-RuvB(12)-Holliday junction (HJ) complex. HJ DNA is sandwiched between 2 RuvA tetramers; dsDNA enters through RuvA and exits via RuvB. An RuvB hexamer assembles on each DNA strand where it exits the tetramer. Each RuvB hexamer is contacted by two RuvA subunits (via domain III) on 2 adjacent RuvB subunits; this complex drives branch migration. In the full resolvosome a probable DNA-RuvA(4)-RuvB(12)-RuvC(2) complex forms which resolves the HJ.

It localises to the cytoplasm. The RuvA-RuvB-RuvC complex processes Holliday junction (HJ) DNA during genetic recombination and DNA repair, while the RuvA-RuvB complex plays an important role in the rescue of blocked DNA replication forks via replication fork reversal (RFR). RuvA specifically binds to HJ cruciform DNA, conferring on it an open structure. The RuvB hexamer acts as an ATP-dependent pump, pulling dsDNA into and through the RuvAB complex. HJ branch migration allows RuvC to scan DNA until it finds its consensus sequence, where it cleaves and resolves the cruciform DNA. The protein is Holliday junction branch migration complex subunit RuvA of Aliivibrio salmonicida (strain LFI1238) (Vibrio salmonicida (strain LFI1238)).